Consider the following 311-residue polypeptide: Ribosomal RNA small subunit methyltransferase H (311 aa).

S-adenosyl-L-methionine-binding positions include 39 to 41 (GGH), D59, F87, D102, and H109.

The protein belongs to the methyltransferase superfamily. RsmH family.

The protein resides in the cytoplasm. It catalyses the reaction cytidine(1402) in 16S rRNA + S-adenosyl-L-methionine = N(4)-methylcytidine(1402) in 16S rRNA + S-adenosyl-L-homocysteine + H(+). Its function is as follows. Specifically methylates the N4 position of cytidine in position 1402 (C1402) of 16S rRNA. The sequence is that of Ribosomal RNA small subunit methyltransferase H from Porphyromonas gingivalis (strain ATCC 33277 / DSM 20709 / CIP 103683 / JCM 12257 / NCTC 11834 / 2561).